A 151-amino-acid polypeptide reads, in one-letter code: Deoxyuridine 5'-triphosphate nucleotidohydrolase (151 aa).

Substrate is bound by residues 70–72 (RSG), Asn-83, 87–89 (LID), and Met-97.

Belongs to the dUTPase family. It depends on Mg(2+) as a cofactor.

It carries out the reaction dUTP + H2O = dUMP + diphosphate + H(+). The protein operates within pyrimidine metabolism; dUMP biosynthesis; dUMP from dCTP (dUTP route): step 2/2. This enzyme is involved in nucleotide metabolism: it produces dUMP, the immediate precursor of thymidine nucleotides and it decreases the intracellular concentration of dUTP so that uracil cannot be incorporated into DNA. The sequence is that of Deoxyuridine 5'-triphosphate nucleotidohydrolase from Haemophilus influenzae (strain 86-028NP).